The following is a 679-amino-acid chain: Protein hook (679 aa).

The tract at residues 1–155 (MSAPKNEMYY…NIMRALQELE (155 aa)) is interaction with microtubules. Residues 6 to 123 (NEMYYSLLEW…RLLQLVLGCA (118 aa)) enclose the Calponin-homology (CH) domain. Coiled-coil stretches lie at residues 135–437 (EIMC…LKCG) and 480–574 (QTAL…QEIL).

The protein belongs to the hook family. As to quaternary structure, homodimer. Interacts with microtubules via its N-terminus.

The protein resides in the cytoplasm. The protein localises to the cytoskeleton. Its subcellular location is the endosome. It localises to the synapse. Functionally, involved in endocytic trafficking by stabilizing organelles of the endocytic pathway. Probably acts as a cytoskeletal linker protein required to tether endosome vesicles to the cytoskeleton. Involved in modulation of endocytosis at stages required for down-regulation of membrane proteins that control synapse size. Not involved in synaptic vesicle recycling. Required in R7 cells for boss endocytosis into multivesicular bodies (MVBs). Has a role in regulating adult longevity. The polypeptide is Protein hook (Drosophila melanogaster (Fruit fly)).